We begin with the raw amino-acid sequence, 410 residues long: DNA primase small subunit (410 aa).

Catalysis depends on residues Glu-43, Asp-106, and Asp-108. A Zinc knuckle motif motif is present at residues 118–129 (CCKDATVCPKCW).

This sequence belongs to the eukaryotic-type primase small subunit family. Heterodimer of a small subunit and a large subunit.

DNA primase is the polymerase that synthesizes small RNA primers for the Okazaki fragments made during discontinuous DNA replication. The sequence is that of DNA primase small subunit (pri-1) from Caenorhabditis elegans.